A 549-amino-acid polypeptide reads, in one-letter code: Undecaprenyl phosphate-alpha-4-amino-4-deoxy-L-arabinose arabinosyl transferase (549 aa).

The next 12 membrane-spanning stretches (helical) occupy residues 9 to 29 (LLLIAFGLFYLVPLSNHGLWI), 80 to 100 (LFGVRIASVVATALSVLLAYL), 112 to 132 (SLACALLYASFGLIAGQSGYA), 133 to 153 (NLDPQFTFWVNLSLVALWHAL), 176 to 196 (FLTKGFLAWLLPVLVALPYML), 204 to 224 (LLGYGALAVLAALLVCLPWAL), 256 to 276 (PWWFYLPLLAVSCLPWSGLLP), 288 to 308 (QAPVVFLALWLLLPLAFFSLS), 312 to 332 (LPTYIMPCLLPLALLMGHALV), 346 to 366 (NGLLNLGLALLALAALAYLQL), 376 to 396 (FELFLVLLVIGAWAAAGLAQW), and 402 to 422 (AWAAPLLASWVLIALLPAAMP).

This sequence belongs to the glycosyltransferase 83 family.

The protein localises to the cell inner membrane. It catalyses the reaction 4-amino-4-deoxy-alpha-L-arabinopyranosyl di-trans,octa-cis-undecaprenyl phosphate + lipid IVA = lipid IIA + di-trans,octa-cis-undecaprenyl phosphate.. It participates in lipopolysaccharide metabolism; 4-amino-4-deoxy-beta-L-arabinose-lipid A biosynthesis. Catalyzes the transfer of the L-Ara4N moiety of the glycolipid undecaprenyl phosphate-alpha-L-Ara4N to lipid A. The modified arabinose is attached to lipid A and is required for resistance to polymyxin and cationic antimicrobial peptides. The protein is Undecaprenyl phosphate-alpha-4-amino-4-deoxy-L-arabinose arabinosyl transferase of Pseudomonas aeruginosa (strain LESB58).